The chain runs to 318 residues: Ubiquitin-like domain-containing CTD phosphatase 1 (318 aa).

The Ubiquitin-like domain maps to 3–81 (LSLIIKWGGQ…IMMMGTREES (79 aa)). The 162-residue stretch at 133 to 294 (PREGKKLLVL…LKLSQYLKEI (162 aa)) folds into the FCP1 homology domain. Residues D143, D145, and D253 each coordinate Mg(2+).

Requires Mg(2+) as cofactor.

It is found in the nucleus. It catalyses the reaction O-phospho-L-seryl-[protein] + H2O = L-seryl-[protein] + phosphate. The catalysed reaction is O-phospho-L-threonyl-[protein] + H2O = L-threonyl-[protein] + phosphate. Dephosphorylates 26S nuclear proteasomes, thereby decreasing their proteolytic activity. Recruited to the 19S regulatory particle of the 26S proteasome where it dephosphorylates 19S component psmc2 which impairs psmc2 ATPase activity and disrupts 26S proteasome assembly. Has also been reported to stimulate the proteolytic activity of the 26S proteasome. This chain is Ubiquitin-like domain-containing CTD phosphatase 1 (ublcp1), found in Xenopus tropicalis (Western clawed frog).